Reading from the N-terminus, the 246-residue chain is 1-(5-phosphoribosyl)-5-[(5-phosphoribosylamino)methylideneamino] imidazole-4-carboxamide isomerase (246 aa).

Aspartate 12 acts as the Proton acceptor in catalysis. The Proton donor role is filled by aspartate 134.

Belongs to the HisA/HisF family.

Its subcellular location is the cytoplasm. The catalysed reaction is 1-(5-phospho-beta-D-ribosyl)-5-[(5-phospho-beta-D-ribosylamino)methylideneamino]imidazole-4-carboxamide = 5-[(5-phospho-1-deoxy-D-ribulos-1-ylimino)methylamino]-1-(5-phospho-beta-D-ribosyl)imidazole-4-carboxamide. It functions in the pathway amino-acid biosynthesis; L-histidine biosynthesis; L-histidine from 5-phospho-alpha-D-ribose 1-diphosphate: step 4/9. The sequence is that of 1-(5-phosphoribosyl)-5-[(5-phosphoribosylamino)methylideneamino] imidazole-4-carboxamide isomerase from Haloarcula marismortui (strain ATCC 43049 / DSM 3752 / JCM 8966 / VKM B-1809) (Halobacterium marismortui).